The following is a 163-amino-acid chain: NADH-quinone oxidoreductase subunit I (163 aa).

4Fe-4S ferredoxin-type domains lie at 53–83 and 94–123; these read LRRYPNGEERCIACKLCEAICPAQAITIEAG and VRYDIDMVKCIYCGFCQEACPVDAIVEGPN. Residues Cys-63, Cys-66, Cys-69, Cys-73, Cys-103, Cys-106, Cys-109, and Cys-113 each coordinate [4Fe-4S] cluster.

It belongs to the complex I 23 kDa subunit family. In terms of assembly, NDH-1 is composed of 14 different subunits. Subunits NuoA, H, J, K, L, M, N constitute the membrane sector of the complex. [4Fe-4S] cluster is required as a cofactor.

It localises to the cell inner membrane. The catalysed reaction is a quinone + NADH + 5 H(+)(in) = a quinol + NAD(+) + 4 H(+)(out). Functionally, NDH-1 shuttles electrons from NADH, via FMN and iron-sulfur (Fe-S) centers, to quinones in the respiratory chain. The immediate electron acceptor for the enzyme in this species is believed to be ubiquinone. Couples the redox reaction to proton translocation (for every two electrons transferred, four hydrogen ions are translocated across the cytoplasmic membrane), and thus conserves the redox energy in a proton gradient. This chain is NADH-quinone oxidoreductase subunit I, found in Allorhizobium ampelinum (strain ATCC BAA-846 / DSM 112012 / S4) (Agrobacterium vitis (strain S4)).